Consider the following 177-residue polypeptide: Ubiquinol-cytochrome c reductase iron-sulfur subunit (177 aa).

A helical transmembrane segment spans residues 18 to 38 (MVLTASSVAAVGAVCTLWPLV). Positions 88–175 (ARAVKMSELI…YTFISDKKIR (88 aa)) constitute a Rieske domain. Residues C120, H122, C139, and H142 each coordinate [2Fe-2S] cluster. Residues C125 and C141 are joined by a disulfide bond.

It belongs to the Rieske iron-sulfur protein family. As to quaternary structure, the main subunits of complex b-c1 are: cytochrome b, cytochrome c1 and the Rieske protein. Requires [2Fe-2S] cluster as cofactor.

It is found in the cell membrane. It catalyses the reaction a quinol + 2 Fe(III)-[cytochrome c](out) = a quinone + 2 Fe(II)-[cytochrome c](out) + 2 H(+)(out). Functionally, component of the ubiquinol-cytochrome c reductase complex (complex III or cytochrome b-c1 complex), which is a respiratory chain that generates an electrochemical potential coupled to ATP synthesis. The polypeptide is Ubiquinol-cytochrome c reductase iron-sulfur subunit (petA) (Rickettsia felis (strain ATCC VR-1525 / URRWXCal2) (Rickettsia azadi)).